The following is a 161-amino-acid chain: 3-isopropylmalate dehydratase small subunit (161 aa).

This sequence belongs to the LeuD family. LeuD type 2 subfamily. As to quaternary structure, heterodimer of LeuC and LeuD.

The catalysed reaction is (2R,3S)-3-isopropylmalate = (2S)-2-isopropylmalate. It participates in amino-acid biosynthesis; L-leucine biosynthesis; L-leucine from 3-methyl-2-oxobutanoate: step 2/4. Functionally, catalyzes the isomerization between 2-isopropylmalate and 3-isopropylmalate, via the formation of 2-isopropylmaleate. The protein is 3-isopropylmalate dehydratase small subunit of Pyrobaculum calidifontis (strain DSM 21063 / JCM 11548 / VA1).